Here is a 226-residue protein sequence, read N- to C-terminus: Protein AF-9 homolog (226 aa).

Residues 8 to 169 (RIKTLSVSRP…EEFFKILMSR (162 aa)) enclose the YEATS domain. Positions 187 to 224 (QLEQEEIDRIEIGIEKVDKEIDELKQKLENLVKQEAIN) form a coiled coil.

In terms of assembly, component of the SWR1 chromatin-remodeling complex composed of at least ACT1, ARP4, RVB1, RVB2, ARP6, YAF9, VPS71, VPS72, SWC3, SWC4, SWC5, SWC7 and SWR1, and perhaps BDF1. Component of the NuA4 histone acetyltransferase complex composed of at least ACT1, ARP4, YAF9, VID21, SWC4, EAF3, EAF5, EAF6, EAF7, EPL1, ESA1, TRA1 and YNG2. Interacts with SWC4.

Its subcellular location is the cytoplasm. It localises to the nucleus. Functionally, component of the SWR1 complex which mediates the ATP-dependent exchange of histone H2A for the H2A variant HZT1 leading to transcriptional regulation of selected genes by chromatin remodeling. Component of the NuA4 histone acetyltransferase complex which is involved in transcriptional activation of selected genes principally by acetylation of nucleosomal histones H4 and H2A. The NuA4 complex is also involved in DNA repair. Yaf9 may also be required for viability in conditions in which the structural integrity of the spindle is compromised. The sequence is that of Protein AF-9 homolog (YAF9) from Saccharomyces cerevisiae (strain ATCC 204508 / S288c) (Baker's yeast).